Reading from the N-terminus, the 316-residue chain is Ribosomal RNA small subunit methyltransferase H (316 aa).

Residues 35–37, D55, F84, D105, and Q112 each bind S-adenosyl-L-methionine; that span reads AGH.

The protein belongs to the methyltransferase superfamily. RsmH family.

It localises to the cytoplasm. The enzyme catalyses cytidine(1402) in 16S rRNA + S-adenosyl-L-methionine = N(4)-methylcytidine(1402) in 16S rRNA + S-adenosyl-L-homocysteine + H(+). Its function is as follows. Specifically methylates the N4 position of cytidine in position 1402 (C1402) of 16S rRNA. The sequence is that of Ribosomal RNA small subunit methyltransferase H from Streptococcus uberis (strain ATCC BAA-854 / 0140J).